Reading from the N-terminus, the 748-residue chain is WD repeat-containing protein 91 (748 aa).

Residues 183–228 (QRTNQVQEENEVLRQKLFALQAEIHRLKKEEQQQEEEAAALVQHKL) adopt a coiled-coil conformation. Position 257 is a phosphoserine (serine 257). Low complexity predominate over residues 266-279 (LLPQSKKSPSRLSP). The tract at residues 266 to 368 (LLPQSKKSPS…PEVSGAEAEP (103 aa)) is disordered. The segment covering 284-300 (PQAQSSAKKDSFSSQAT) has biased composition (polar residues). Phosphoserine is present on residues serine 289 and serine 294. Residues 333-344 (RLQDHGKERREL) show a composition bias toward basic and acidic residues. Residues 345–354 (LSTSSSQSQC) show a composition bias toward polar residues. WD repeat units lie at residues 407 to 446 (EHHSSIMHCRVDCSGRRVASLDVDGVIKVWSFNPIMQTKA), 449 to 489 (ISKS…NLCE), 512 to 556 (VCSA…QQLQ), 561 to 600 (PEPIAINCTAFNHNGNLLVTGAADGVIRLFDMQQHECAMS), 603 to 642 (AHCGEVYSVEFSCDENAVYSIGEDRKFIQWNIHKSGLKVS), 665 to 703 (VQVPRGRLFAFDSEGNYMLTCSATGGLIYKLGSEEKVLE), and 710 to 748 (GHRAPVVTVDWSTAMDCGTCLTASMDGKIKLTTLLAHKL).

This sequence belongs to the WD repeat WDR91 family. In terms of assembly, interacts with WDR81; involved in early to late endosome cargo transport. Interacts with BECN1; negatively regulates the PI3 kinase/PI3K activity associated with endosomal membranes.

It is found in the early endosome membrane. Its subcellular location is the late endosome membrane. Functionally, functions as a negative regulator of the PI3 kinase/PI3K activity associated with endosomal membranes via BECN1, a core subunit of the PI3K complex. By modifying the phosphatidylinositol 3-phosphate/PtdInsP3 content of endosomal membranes may regulate endosome fusion, recycling, sorting and early to late endosome transport. It is for instance, required for the delivery of cargos like BST2/tetherin from early to late endosome and thereby participates indirectly to their degradation by the lysosome. May play a role in meiosis. In Mus musculus (Mouse), this protein is WD repeat-containing protein 91.